The following is a 457-amino-acid chain: MQKYISEARLLLALAIPVILAQIAQTAMGFVDTVMAGGYSATDMAAVAIGTSIWLPAILFGHGLLLALTPVIAQLNGSGRRERIAHQVRQGFWLAGFVSVLIMLVLWNAGYIIRSMENIDPALADKAVGYLRALLWGAPGYLFFQVARNQCEGLAKTKPGMVMGFIGLLVNIPVNYIFIYGHFGMPELGGVGCGVATAAVYWVMFLAMVSYIKRARSMRDIRNEKGTAKPDPAVMKRLIQLGLPIALALFFEVTLFAVVALLVSPLGIVDVAGHQIALNFSSLMFVLPMSLAAAVTIRVGYRLGQGSTLDAQTAARTGLMVGVCMATLTAIFTVSLREQIALLYNDNPEVVTLAAHLMLLAAVYQISDSIQVIGSGILRGYKDTRSIFYITFTAYWVLGLPSGYILALTDLVVEPMGPAGFWIGFIIGLTSAAIMMMLRMRFLQRLPSVIILQRASR.

The next 12 membrane-spanning stretches (helical) occupy residues Leu-11–Val-31, Ile-53–Ala-73, Trp-93–Ile-113, Ala-127–Ala-147, Gly-160–Tyr-180, Gly-189–Val-209, Leu-243–Val-263, Ile-276–Thr-296, Ala-314–Val-334, Val-350–Ile-370, Ile-387–Ala-407, and Pro-418–Leu-438.

Belongs to the multi antimicrobial extrusion (MATE) (TC 2.A.66.1) family. MdtK subfamily.

Its subcellular location is the cell inner membrane. In terms of biological role, multidrug efflux pump that functions probably as a Na(+)/drug antiporter. This is Multidrug resistance protein MdtK from Escherichia coli O139:H28 (strain E24377A / ETEC).